A 109-amino-acid polypeptide reads, in one-letter code: Translation initiation factor IF-1, chloroplastic (109 aa).

An S1-like domain is found at 18-93 (KSLNQEKENL…TRGRIIYRLK (76 aa)).

The protein belongs to the IF-1 family. As to quaternary structure, component of the 30S ribosomal translation pre-initiation complex which assembles on the 30S ribosome in the order IF-2 and IF-3, IF-1 and N-formylmethionyl-tRNA(fMet); mRNA recruitment can occur at any time during PIC assembly.

The protein localises to the plastid. The protein resides in the chloroplast. In terms of biological role, one of the essential components for the initiation of protein synthesis. Stabilizes the binding of IF-2 and IF-3 on the 30S subunit to which N-formylmethionyl-tRNA(fMet) subsequently binds. Helps modulate mRNA selection, yielding the 30S pre-initiation complex (PIC). Upon addition of the 50S ribosomal subunit IF-1, IF-2 and IF-3 are released leaving the mature 70S translation initiation complex. In Tupiella akineta (Green alga), this protein is Translation initiation factor IF-1, chloroplastic.